Reading from the N-terminus, the 261-residue chain is MLHVLRPGYAGAVNGHSNNGNDDETSTTPTLYIFPHAGGDATYYVPFSREFSADIKRIAVHYPGQRDGYGLPALTSIPALADEIFAIMKPSAPPEGAVAFFGHSMGGMLAFEVALRFQSAGYRLIALFVSACSAPGYIRYKQIKDFSDNDMLDLVVRMTGMNPDFFEDEEFRVGVLPTLRAARIIAGYNCPPETTVSCPIYTYIGDKDWIATQEDMKPWRERTTGAFAIRVFPGDHFYLNGNLSELVCDIEDKTLEWCDRA.

Active-site residues include S104, D208, and H236.

This sequence belongs to the thioesterase family.

The catalysed reaction is a fatty acyl-CoA + H2O = a fatty acid + CoA + H(+). Its function is as follows. Involved in the synthesis of both phthiocerol dimycocerosates (PDIMs) and phenolic glycolipids (PGLs), which are structurally related lipids non-covalently bound to the outer cell wall layer of M.tuberculosis and are important virulence factors. The chain is Thioesterase TesA (tesA) from Mycobacterium leprae (strain TN).